Consider the following 295-residue polypeptide: Aquaporin NIP2-1 (295 aa).

The next 2 membrane-spanning stretches (helical) occupy residues 49-69 and 83-103; these read VVSE…AAGI and SVAG…ISGA. Positions 106–108 match the NPA 1 motif; it reads NPA. 3 helical membrane-spanning segments follow: residues 124–146, 164–184, and 192–212; these read VPFY…KAVL, SLVI…AVAT, and LAGL…GAVS. The NPA 2 motif lies at 217-219; sequence NPA. A helical membrane pass occupies residues 230 to 250; sequence LYTGLWIYFLGPVLGTLSGAW.

This sequence belongs to the MIP/aquaporin (TC 1.A.8) family. NIP (TC 1.A.8.12) subfamily.

It localises to the membrane. In terms of biological role, aquaporins facilitate the transport of water and small neutral solutes across cell membranes. The chain is Aquaporin NIP2-1 (NIP2-1) from Zea mays (Maize).